The following is a 309-amino-acid chain: Serine/threonine-protein phosphatase 2A catalytic subunit alpha isoform (309 aa).

Positions 57, 59, 85, and 117 each coordinate Mn(2+). Residues D57, H59, and D85 each contribute to the Zn(2+) site. Residues D85 and N117 each coordinate Fe(3+). H118 (proton donor) is an active-site residue. Residues H167 and H241 each coordinate Mn(2+). H167 and H241 together coordinate Fe(3+). At Y307 the chain carries Phosphotyrosine. Leucine methyl ester is present on L309.

It belongs to the PPP phosphatase family. PP-1 subfamily. PP2A consists of a common heterodimeric core enzyme composed of PPP2CA, a 36 kDa catalytic subunit (subunit C), and PPP2R1A, a 65 kDa constant regulatory subunit (PR65 or subunit A), that associates with a variety of regulatory subunits. Proteins that associate with the core dimer include three families of regulatory subunits B (the R2/B/PR55/B55, R3/B''/PR72/PR130/PR59 and R5/B'/B56 families), the 48 kDa variable regulatory subunit, viral proteins, and cell signaling molecules. Interacts with the PP2A A subunit PPP2R1A. Interacts with the regulatory subunit PPP2R2A. Interacts (via C-terminus) with PTPA. Interacts with NXN; the interaction is direct. Interacts with KCTD20. Interacts with BTBD10. Interacts with SGO1 and SGO2. Interacts with RAF1. Interaction with IGBP1 protects unassembled PPP2CA from degradative ubiquitination. Interacts with GSK3B (via C2 domain). Interacts with MFHAS1; retains PPP2CA into the cytoplasm and excludes it from the nucleus. Interacts with PABIR1/FAM122A. Interacts with ADCY8; interaction is phosphatase activity-dependent; antagonizes interaction between ADCY8 and calmodulin. Interacts with CRTC3 (when phosphorylated at 'Ser-391'). Interacts with SPRY2; the interaction is inhibited by TESK1 interaction with SPRY2, possibly by vesicular sequestration of SPRY2. Interacts with TRAF3IP3. Interacts with AMBRA1 (via PxP motifs); enhancing interaction between PPP2CA and MYC or FOXO3. Forms a complex with AMBRA1 and BECN1; AMBRA1 and BECN1 components of the complex regulate MYC stability via different pathways. Part of the core of STRIPAK complexes composed of PP2A catalytic and scaffolding subunits, the striatins (PP2A regulatory subunits), the striatin-associated proteins MOB4, STRIP1 and STRIP2, PDCD10 and members of the STE20 kinases, such as STK24 and STK26. Phosphatase component of the Integrator-PP2A (INTAC) complex, composed of the Integrator core complex and protein phosphatase 2A subunits PPP2CA and PPP2R1A. The cofactor is Mn(2+). It depends on Fe(3+) as a cofactor. Zn(2+) serves as cofactor. Post-translationally, reversibly methyl esterified on Leu-309 by leucine carboxyl methyltransferase 1 (LCMT1) and protein phosphatase methylesterase 1 (PPME1). Carboxyl methylation influences the affinity of the catalytic subunit for the different regulatory subunits, thereby modulating the PP2A holoenzyme's substrate specificity, enzyme activity and cellular localization. Phosphorylation of either threonine (by autophosphorylation-activated protein kinase) or tyrosine results in inactivation of the phosphatase. Auto-dephosphorylation has been suggested as a mechanism for reactivation. In terms of processing, polyubiquitinated, leading to its degradation by the proteasome.

The protein localises to the cytoplasm. The protein resides in the nucleus. Its subcellular location is the chromosome. It is found in the centromere. It localises to the cytoskeleton. The protein localises to the spindle pole. It carries out the reaction O-phospho-L-seryl-[protein] + H2O = L-seryl-[protein] + phosphate. The enzyme catalyses O-phospho-L-threonyl-[protein] + H2O = L-threonyl-[protein] + phosphate. Its activity is regulated as follows. Inhibited by the interaction between PPP2R2A and ARPP19; this inhibition is enhanced when ARPP19 is phosphorylated. Inhibited by the interaction between PPP2R2A and PABIR1/FAM122A. In terms of biological role, catalytic subunit of protein phosphatase 2A (PP2A), a serine/threonine phosphatase involved in the regulation of a wide variety of enzymes, signal transduction pathways, and cellular events. PP2A is the major phosphatase for microtubule-associated proteins (MAPs). PP2A can modulate the activity of phosphorylase B kinase casein kinase 2, mitogen-stimulated S6 kinase, and MAP-2 kinase. Cooperates with SGO2 to protect centromeric cohesin from separase-mediated cleavage in oocytes specifically during meiosis I. Can dephosphorylate various proteins, such as SV40 large T antigen, AXIN1, p53/TP53, PIM3, WEE1. Activates RAF1 by dephosphorylating it at 'Ser-259'. Mediates dephosphorylation of WEE1, preventing its ubiquitin-mediated proteolysis, increasing WEE1 protein levels, and promoting the G2/M checkpoint. Mediates dephosphorylation of MYC; promoting its ubiquitin-mediated proteolysis: interaction with AMBRA1 enhances interaction between PPP2CA and MYC. Mediates dephosphorylation of FOXO3; promoting its stabilization: interaction with AMBRA1 enhances interaction between PPP2CA and FOXO3. Catalyzes dephosphorylation of the pyrin domain of NLRP3, promoting assembly of the NLRP3 inflammasome. Together with RACK1 adapter, mediates dephosphorylation of AKT1 at 'Ser-473', preventing AKT1 activation and AKT-mTOR signaling pathway. Dephosphorylation of AKT1 is essential for regulatory T-cells (Treg) homeostasis and stability. Catalyzes dephosphorylation of PIM3, promotinh PIM3 ubiquitination and proteasomal degradation. Part of the striatin-interacting phosphatase and kinase (STRIPAK) complexes. STRIPAK complexes have critical roles in protein (de)phosphorylation and are regulators of multiple signaling pathways including Hippo, MAPK, nuclear receptor and cytoskeleton remodeling. Different types of STRIPAK complexes are involved in a variety of biological processes such as cell growth, differentiation, apoptosis, metabolism and immune regulation. Key mediator of a quality checkpoint during transcription elongation as part of the Integrator-PP2A (INTAC) complex. The INTAC complex drives premature transcription termination of transcripts that are unfavorably configured for transcriptional elongation: within the INTAC complex, PPP2CA catalyzes dephosphorylation of the C-terminal domain (CTD) of Pol II subunit POLR2A/RPB1 and SUPT5H/SPT5, thereby preventing transcriptional elongation. This Homo sapiens (Human) protein is Serine/threonine-protein phosphatase 2A catalytic subunit alpha isoform (PPP2CA).